The following is a 29-amino-acid chain: Cyclotide psyleio B (29 aa).

Positions 1–29 (GDLPICGETCFGGTCNTPGCVCAWPVCNR) form a cross-link, cyclopeptide (Gly-Arg). Intrachain disulfides connect Cys-6/Cys-20, Cys-10/Cys-22, and Cys-15/Cys-27.

In terms of processing, this is a cyclic peptide.

Probably participates in a plant defense mechanism. The polypeptide is Cyclotide psyleio B (Psychotria brachyceras).